Reading from the N-terminus, the 366-residue chain is tRNA/tmRNA (uracil-C(5))-methyltransferase (366 aa).

S-adenosyl-L-methionine is bound by residues Q189, Y217, N222, E238, and D298. Catalysis depends on C323, which acts as the Nucleophile. E357 acts as the Proton acceptor in catalysis.

It belongs to the class I-like SAM-binding methyltransferase superfamily. RNA M5U methyltransferase family. TrmA subfamily.

It carries out the reaction uridine(54) in tRNA + S-adenosyl-L-methionine = 5-methyluridine(54) in tRNA + S-adenosyl-L-homocysteine + H(+). The catalysed reaction is uridine(341) in tmRNA + S-adenosyl-L-methionine = 5-methyluridine(341) in tmRNA + S-adenosyl-L-homocysteine + H(+). Dual-specificity methyltransferase that catalyzes the formation of 5-methyluridine at position 54 (m5U54) in all tRNAs, and that of position 341 (m5U341) in tmRNA (transfer-mRNA). This chain is tRNA/tmRNA (uracil-C(5))-methyltransferase, found in Photorhabdus laumondii subsp. laumondii (strain DSM 15139 / CIP 105565 / TT01) (Photorhabdus luminescens subsp. laumondii).